Consider the following 267-residue polypeptide: Indole-3-glycerol phosphate synthase (267 aa).

It belongs to the TrpC family.

The enzyme catalyses 1-(2-carboxyphenylamino)-1-deoxy-D-ribulose 5-phosphate + H(+) = (1S,2R)-1-C-(indol-3-yl)glycerol 3-phosphate + CO2 + H2O. It participates in amino-acid biosynthesis; L-tryptophan biosynthesis; L-tryptophan from chorismate: step 4/5. In Delftia acidovorans (strain DSM 14801 / SPH-1), this protein is Indole-3-glycerol phosphate synthase.